We begin with the raw amino-acid sequence, 391 residues long: Trehalose-phosphate phosphatase (391 aa).

Asp147 functions as the Nucleophile in the catalytic mechanism. The Mg(2+) site is built by Asp147, Asp149, and Asp330. A substrate-binding site is contributed by Asp147–Asp149.

The protein belongs to the trehalose phosphatase family. Mg(2+) serves as cofactor.

The enzyme catalyses alpha,alpha-trehalose 6-phosphate + H2O = alpha,alpha-trehalose + phosphate. It functions in the pathway glycan biosynthesis; trehalose biosynthesis. Removes the phosphate from trehalose 6-phosphate to produce free trehalose. The sequence is that of Trehalose-phosphate phosphatase (otsB) from Mycobacterium avium (strain 104).